We begin with the raw amino-acid sequence, 216 residues long: ADP-sugar pyrophosphatase (216 aa).

Met-1 is modified (N-acetylmethionine). 2 positions are modified to phosphoserine: Ser-3 and Ser-10. Trp-28 provides a ligand contact to substrate. Residue Lys-42 forms a Glycyl lysine isopeptide (Lys-Gly) (interchain with G-Cter in SUMO2) linkage. Thr-45 is subject to Phosphothreonine. Substrate-binding positions include 46–47 and Arg-51; that span reads WE. Residues 57 to 194 form the Nudix hydrolase domain; it reads QTADGVAVIP…EEHLTVDARV (138 aa). Tyr-74 bears the Phosphotyrosine mark. Arg-84 is a binding site for substrate. Ala-96 lines the Mg(2+) pocket. The Nudix box signature appears at 97–118; it reads GLIDDGETPEAAALRELEEETG. Leu-98 lines the substrate pocket. Glu-112 and Glu-116 together coordinate Mg(2+). A substrate-binding site is contributed by Asp-133. Residue Glu-163 coordinates Mg(2+). N6-acetyllysine occurs at positions 207 and 215.

It belongs to the Nudix hydrolase family. Homodimer. Interacts with PARG. Mg(2+) serves as cofactor. Post-translationally, phosphorylation at Thr-45 is required for homodimer stability; dephosphorylation results in destabilization of the homodimer. Dephosphorylation at Thr-45 promotes the ATP-synthesis activity.

The protein resides in the nucleus. It catalyses the reaction D-ribose 5-phosphate + ATP + H(+) = ADP-D-ribose + diphosphate. The catalysed reaction is ADP-D-ribose + H2O = D-ribose 5-phosphate + AMP + 2 H(+). The enzyme catalyses 8-oxo-dGDP + H2O = 8-oxo-dGMP + phosphate + H(+). In terms of biological role, enzyme that can either act as an ADP-sugar pyrophosphatase in absence of diphosphate or catalyze the synthesis of ATP in presence of diphosphate. In absence of diphosphate, hydrolyzes with similar activities various modified nucleoside diphosphates such as ADP-ribose, ADP-mannose, ADP-glucose, 8-oxo-GDP and 8-oxo-dGDP. Can also hydrolyze other nucleotide sugars with low activity. In presence of diphosphate, mediates the synthesis of ATP in the nucleus by catalyzing the conversion of ADP-ribose to ATP and ribose 5-phosphate. Nuclear ATP synthesis takes place when dephosphorylated at Thr-45. Nuclear ATP generation is required for extensive chromatin remodeling events that are energy-consuming. Does not play a role in U8 snoRNA decapping activity. Binds U8 snoRNA. The chain is ADP-sugar pyrophosphatase from Pongo abelii (Sumatran orangutan).